Here is a 287-residue protein sequence, read N- to C-terminus: Protease HtpX (287 aa).

Transmembrane regions (helical) follow at residues 4-24 (IFLL…VMSI) and 33-53 (GGLL…SLAI). Residue histidine 139 participates in Zn(2+) binding. Residue glutamate 140 is part of the active site. Histidine 143 is a binding site for Zn(2+). The next 2 membrane-spanning stretches (helical) occupy residues 154–174 (LIQG…AGII) and 195–215 (AVVF…VAYF). A Zn(2+)-binding site is contributed by glutamate 220.

It belongs to the peptidase M48B family. Requires Zn(2+) as cofactor.

It is found in the cell inner membrane. In Shewanella frigidimarina (strain NCIMB 400), this protein is Protease HtpX.